A 273-amino-acid chain; its full sequence is Putative peptidyl-prolyl cis-trans isomerase Cbf2 (273 aa).

Positions 1 to 21 are cleaved as a signal peptide; it reads MKKFSLVAATLIAGVVLNVNA. One can recognise a PpiC domain in the interval 131-228; sequence PARVQAKHIL…FGYHVILKEN (98 aa).

It carries out the reaction [protein]-peptidylproline (omega=180) = [protein]-peptidylproline (omega=0). The chain is Putative peptidyl-prolyl cis-trans isomerase Cbf2 (cbf2) from Campylobacter jejuni subsp. jejuni serotype O:2 (strain ATCC 700819 / NCTC 11168).